The following is a 619-amino-acid chain: Chitinase C (619 aa).

A signal peptide spans 1–30; that stretch reads MRFRHKAAALAATLALPLAGLVGLASPAQA. In terms of domain architecture, CBM2 spans 31-134; the sequence is ATSATATFAK…KLNGGSCDGT (104 aa). One can recognise a Fibronectin type-III domain in the interval 144–229; that stretch reads APGTPTASNI…GAVKVTTTGG (86 aa). Residues 212-236 form a disordered region; sequence ADQTGPASGAVKVTTTGGGDGGNPG. Residues 227 to 236 show a composition bias toward gly residues; it reads TGGGDGGNPG. One can recognise a GH18 domain in the interval 240–619; sequence EVKMGYFTNW…TPAVRTTRRH (380 aa). Residues 312-313 and 339-342 each bind chitin; these read DQ and GGWT. Catalysis depends on Glu382, which acts as the Proton donor. Residues Tyr383, 449-452, and Trp589 contribute to the chitin site; that span reads MTYD.

Belongs to the glycosyl hydrolase 18 family. Chitinase class II subfamily.

The catalysed reaction is Random endo-hydrolysis of N-acetyl-beta-D-glucosaminide (1-&gt;4)-beta-linkages in chitin and chitodextrins.. This Streptomyces lividans protein is Chitinase C (chiC).